We begin with the raw amino-acid sequence, 234 residues long: Thymidylate kinase (234 aa).

10 to 17 (GGEGSGKT) contacts ATP.

This sequence belongs to the thymidylate kinase family.

The catalysed reaction is dTMP + ATP = dTDP + ADP. In terms of biological role, phosphorylation of dTMP to form dTDP in both de novo and salvage pathways of dTTP synthesis. This Cyanothece sp. (strain PCC 7425 / ATCC 29141) protein is Thymidylate kinase.